Consider the following 111-residue polypeptide: Cytochrome c (111 aa).

Ala1 bears the N-acetylalanine mark. Residues Cys22, Cys25, and His26 each coordinate heme c. The residue at position 80 (Lys80) is an N6,N6,N6-trimethyllysine. Met88 contacts heme c. Lys94 is modified (N6,N6,N6-trimethyllysine).

This sequence belongs to the cytochrome c family. Post-translationally, binds 1 heme c group covalently per subunit.

Its subcellular location is the mitochondrion intermembrane space. Electron carrier protein. The oxidized form of the cytochrome c heme group can accept an electron from the heme group of the cytochrome c1 subunit of cytochrome reductase. Cytochrome c then transfers this electron to the cytochrome oxidase complex, the final protein carrier in the mitochondrial electron-transport chain. The sequence is that of Cytochrome c from Gossypium barbadense (Sea Island cotton).